A 1842-amino-acid chain; its full sequence is Fatty acid synthase subunit alpha (1842 aa).

The tract at residues 101–141 is disordered; it reads PAEAPASTSSTPKVETAAAAAPAATPAPAPAQTSAPAAALP. Residues 116 to 139 are compositionally biased toward low complexity; that stretch reads TAAAAAPAATPAPAPAQTSAPAAA. The Carrier domain occupies 145–220; it reads PKALEVLHTL…AIMQSSFNGS (76 aa). O-(pantetheine 4'-phosphoryl)serine is present on Ser-180. Phosphoserine is present on Ser-604. Positions 1079-1616 constitute a Ketosynthase family 3 (KS3) domain; it reads LQEVVIDHDL…QVGGQVIVIH (538 aa). The For beta-ketoacyl synthase activity role is filled by Cys-1262. Residues 1304–1332 are disordered; that stretch reads GATSNAAKETERGRTPQEMSRPATSTRDG. Residue Ser-1412 is modified to Phosphoserine. Active-site for beta-ketoacyl synthase activity residues include His-1501 and His-1542. Positions 1728, 1729, and 1730 each coordinate Mg(2+). Acetyl-CoA contacts are provided by residues 1728–1730, Tyr-1754, Ser-1764, 1773–1783, 1797–1800, and 1827–1829; these read DVE, EAVFKSLGISG, SSES, and ISH. Mg(2+) is bound by residues Ser-1828 and His-1829.

This sequence belongs to the thiolase-like superfamily. Fungal fatty acid synthetase subunit alpha family. [Alpha(6)beta(6)] hexamers of two multifunctional subunits (alpha and beta).

The enzyme catalyses acetyl-CoA + n malonyl-CoA + 2n NADPH + 4n H(+) = a long-chain-acyl-CoA + n CoA + n CO2 + 2n NADP(+).. It carries out the reaction a fatty acyl-[ACP] + malonyl-[ACP] + H(+) = a 3-oxoacyl-[ACP] + holo-[ACP] + CO2. It catalyses the reaction a (3R)-hydroxyacyl-[ACP] + NADP(+) = a 3-oxoacyl-[ACP] + NADPH + H(+). Functionally, fatty acid synthetase catalyzes the formation of long-chain fatty acids from acetyl-CoA, malonyl-CoA and NADPH. The alpha subunit contains domains for: acyl carrier protein, 3-oxoacyl-[acyl-carrier-protein] reductase, and 3-oxoacyl-[acyl-carrier-protein] synthase. This subunit coordinates the binding of the six beta subunits to the enzyme complex. The chain is Fatty acid synthase subunit alpha (fas2) from Schizosaccharomyces pombe (strain 972 / ATCC 24843) (Fission yeast).